The primary structure comprises 318 residues: Ethylene-responsive transcription factor FZP (318 aa).

The segment covering 1–15 has biased composition (low complexity); that stretch reads MNTRGSGSSSSSSSS. Disordered regions lie at residues 1–59 and 158–178; these read MNTR…GRFL and SYGHHHHHHHHHGHGAASGAS. The span at 25–37 shows a compositional bias: pro residues; sequence PPKPASQPSPPSS. Residues 57-114 constitute a DNA-binding region (AP2/ERF); sequence RFLGVRRRPWGRYAAEIRDPTTKERHWLGTFDTAQEAALAYDRAALSMKGAQARTNFV. Basic residues predominate over residues 160 to 171; sequence GHHHHHHHHHGH.

Belongs to the AP2/ERF transcription factor family. ERF subfamily.

Its subcellular location is the nucleus. Required to prevent the formation of axillary meristems within the spikelet meristem and permit the subsequent establishment of floral meristem identity. Mediates the transition from spikelet to floret meristem. Determines the transition from panicle branching to spikelet formation. May specify floral organ identity by regulating the class B genes (Agamous-like genes) MADS6 and MADS17, as well as class E genes MADS1, MADS7 and MADS8 in floral meristem. Possesses transactivation activity. This is Ethylene-responsive transcription factor FZP from Oryza sativa subsp. japonica (Rice).